Here is a 160-residue protein sequence, read N- to C-terminus: Transcription elongation factor GreB (160 aa).

It belongs to the GreA/GreB family. GreB subfamily.

Necessary for efficient RNA polymerase transcription elongation past template-encoded arresting sites. The arresting sites in DNA have the property of trapping a certain fraction of elongating RNA polymerases that pass through, resulting in locked ternary complexes. Cleavage of the nascent transcript by cleavage factors such as GreA or GreB allows the resumption of elongation from the new 3'terminus. GreB releases sequences of up to 9 nucleotides in length. This chain is Transcription elongation factor GreB, found in Vibrio vulnificus (strain YJ016).